A 190-amino-acid chain; its full sequence is Capsid protein (190 aa).

Residues 1-24 (MSTVGTGKLTRAQRRAAARKNKRN) form a disordered region. At S2 the chain carries N-acetylserine; by host. The segment covering 11–24 (RAQRRAAARKNKRN) has biased composition (basic residues).

Belongs to the bromovirus capsid protein family.

It is found in the virion. In terms of biological role, capsid protein. Probably binds RNA and plays a role in packaging. The chain is Capsid protein from Cowpea chlorotic mottle virus (CCMV).